The chain runs to 278 residues: Sulfur carrier protein FdhD (278 aa).

Residue C124 is the Cysteine persulfide intermediate of the active site.

It belongs to the FdhD family.

The protein localises to the cytoplasm. Required for formate dehydrogenase (FDH) activity. Acts as a sulfur carrier protein that transfers sulfur from IscS to the molybdenum cofactor prior to its insertion into FDH. This is Sulfur carrier protein FdhD from Burkholderia cenocepacia (strain ATCC BAA-245 / DSM 16553 / LMG 16656 / NCTC 13227 / J2315 / CF5610) (Burkholderia cepacia (strain J2315)).